The following is a 354-amino-acid chain: CREB/ATF bZIP transcription factor (354 aa).

Disordered stretches follow at residues 1-95 (MRHS…PGEE), 113-156 (PRQP…AAEM), and 171-214 (GGCS…RKAA). Ser50 carries the phosphoserine modification. Residues 121–132 (DPGLSSPGPLSS) show a composition bias toward low complexity. Gly residues-rich tracts occupy residues 133-143 (SGGGSDSGGLW) and 190-199 (PGGGGGGGSG). Residues 204 to 267 (QAATKSPRKA…QALQEESRYL (64 aa)) enclose the bZIP domain. Over residues 205-214 (AATKSPRKAA) the composition is skewed to low complexity. A basic motif region spans residues 219 to 226 (RLNRLKKK). Residues 232 to 267 (LESRVRGLAAENQELRAENRELGKRVQALQEESRYL) are leucine-zipper. The HCFC1-binding motif (HBM) motif lies at 303–306 (DHDY).

This sequence belongs to the bZIP family. ATF subfamily. Interacts with HCFC1; the interaction inhibits CREB3 transcriptional activity. Interacts with CREB3; the interaction occurs only in combination with HCFC1. In terms of tissue distribution, in adults, expressed most abundantly in heart, liver and skeletal muscle, moderately abundant in kidney and pancreas, and barely detectable in lung. In fetal tissues, expressed most abundantly in kidney and very low amounts in heart, lung and liver.

Its subcellular location is the nucleus. Functionally, strongly activates transcription when bound to HCFC1. Suppresses the expression of HSV proteins in cells infected with the virus in a HCFC1-dependent manner. Also suppresses the HCFC1-dependent transcriptional activation by CREB3 and reduces the amount of CREB3 in the cell. Able to down-regulate expression of some cellular genes in CREBZF-expressing cells. The sequence is that of CREB/ATF bZIP transcription factor (CREBZF) from Homo sapiens (Human).